A 204-amino-acid chain; its full sequence is NAD(P)H dehydrogenase (quinone) FQR1 (204 aa).

Residues 5-192 form the Flavodoxin-like domain; that stretch reads VYIVYYSMYG…QQAFHQGQYI (188 aa). FMN contacts are provided by residues 11-15, 112-165, and His136; these read SMYGH and IFYS…SPYG. Tyr13 contributes to the NAD(+) binding site.

The protein belongs to the WrbA family. FMN is required as a cofactor.

The protein resides in the cell membrane. It carries out the reaction a quinone + NADH + H(+) = a quinol + NAD(+). It catalyses the reaction a quinone + NADPH + H(+) = a quinol + NADP(+). In terms of biological role, catalyzes the transfer of electrons from NADH and NADPH to several quinones in vitro. May act as detoxification enzyme, and protect against auxin-induced oxidative stress. In Arabidopsis thaliana (Mouse-ear cress), this protein is NAD(P)H dehydrogenase (quinone) FQR1.